The chain runs to 393 residues: MQLEDFMRYPDLVCQAAQLPRYTWNGRRSLEVKRNLAKRIIFWLGAVNLVYHNIGCVMYGYFGDGRTKDPIAYLAELASVASMLGFTIVGTLNLWKMLSLKTHFENLLNEFEELFQLIKHRAYRIHHYQEKYTRHIRNTFIFHTSAVVYYNSLPILLMIREHFSNSQQLGYRIQSNTWYPWQVQGSIPGFFAAVACQIFSCQTNMCVNMFIQFLINFFGIQLEIHFDGLARQLETIDARNPHAKDQLKYLIVYHTKLLNLADRVNRSFNFTFLISLSVSMISNCFLAFSMTMFDFGTSLKHLLGLLLFITYNFSMCRSGTHLILTSGKVLPAAFYNNWYEGDLVYRRMLLILMMRATKPYMWKTYKLAPVSITTYMATLKFSYQMFTCVRSLK.

Over 1-39 (MQLEDFMRYPDLVCQAAQLPRYTWNGRRSLEVKRNLAKR) the chain is Cytoplasmic. Residues 40–60 (IIFWLGAVNLVYHNIGCVMYG) traverse the membrane as a helical segment. The Extracellular portion of the chain corresponds to 61–69 (YFGDGRTKD). Residues 70 to 90 (PIAYLAELASVASMLGFTIVG) traverse the membrane as a helical segment. Over 91-138 (TLNLWKMLSLKTHFENLLNEFEELFQLIKHRAYRIHHYQEKYTRHIRN) the chain is Cytoplasmic. Residues 139–159 (TFIFHTSAVVYYNSLPILLMI) traverse the membrane as a helical segment. The Extracellular segment spans residues 160–208 (REHFSNSQQLGYRIQSNTWYPWQVQGSIPGFFAAVACQIFSCQTNMCVN). The chain crosses the membrane as a helical span at residues 209-229 (MFIQFLINFFGIQLEIHFDGL). The Cytoplasmic segment spans residues 230–269 (ARQLETIDARNPHAKDQLKYLIVYHTKLLNLADRVNRSFN). The helical transmembrane segment at 270-290 (FTFLISLSVSMISNCFLAFSM) threads the bilayer. Over 291-305 (TMFDFGTSLKHLLGL) the chain is Extracellular. The chain crosses the membrane as a helical span at residues 306–326 (LLFITYNFSMCRSGTHLILTS). Topologically, residues 327–365 (GKVLPAAFYNNWYEGDLVYRRMLLILMMRATKPYMWKTY) are cytoplasmic. A helical membrane pass occupies residues 366 to 386 (KLAPVSITTYMATLKFSYQMF). Over 387 to 393 (TCVRSLK) the chain is Extracellular.

It belongs to the insect chemoreceptor superfamily. Heteromeric odorant receptor channel (TC 1.A.69) family. Or49a subfamily. In terms of assembly, interacts with Orco. Complexes exist early in the endomembrane system in olfactory sensory neurons (OSNs), coupling these complexes to the conserved ciliary trafficking pathway. As to expression, expressed in olfactory sensory neurons in the antenna.

The protein localises to the cell membrane. Functionally, odorant receptor which mediates acceptance or avoidance behavior, depending on its substrates. The odorant receptor repertoire encodes a large collection of odor stimuli that vary widely in identity, intensity, and duration. May form a complex with Orco to form odorant-sensing units, providing sensitive and prolonged odorant signaling and calcium permeability. The protein is Putative odorant receptor 69a, isoform B (Or69a) of Drosophila melanogaster (Fruit fly).